Reading from the N-terminus, the 218-residue chain is Imidazole glycerol phosphate synthase subunit HisH (218 aa).

One can recognise a Glutamine amidotransferase type-1 domain in the interval serine 12–glutamine 218. Residue cysteine 88 is the Nucleophile of the active site. Residues histidine 196 and glutamate 198 contribute to the active site.

Heterodimer of HisH and HisF.

It is found in the cytoplasm. It catalyses the reaction 5-[(5-phospho-1-deoxy-D-ribulos-1-ylimino)methylamino]-1-(5-phospho-beta-D-ribosyl)imidazole-4-carboxamide + L-glutamine = D-erythro-1-(imidazol-4-yl)glycerol 3-phosphate + 5-amino-1-(5-phospho-beta-D-ribosyl)imidazole-4-carboxamide + L-glutamate + H(+). The enzyme catalyses L-glutamine + H2O = L-glutamate + NH4(+). The protein operates within amino-acid biosynthesis; L-histidine biosynthesis; L-histidine from 5-phospho-alpha-D-ribose 1-diphosphate: step 5/9. Its function is as follows. IGPS catalyzes the conversion of PRFAR and glutamine to IGP, AICAR and glutamate. The HisH subunit catalyzes the hydrolysis of glutamine to glutamate and ammonia as part of the synthesis of IGP and AICAR. The resulting ammonia molecule is channeled to the active site of HisF. The sequence is that of Imidazole glycerol phosphate synthase subunit HisH from Halobacterium salinarum (strain ATCC 700922 / JCM 11081 / NRC-1) (Halobacterium halobium).